A 201-amino-acid chain; its full sequence is L(+)-tartrate dehydratase subunit beta (201 aa).

Histidine 37 is a catalytic residue.

It belongs to the class-I fumarase family. As to quaternary structure, heterotetramer of two alpha and two beta subunits.

The catalysed reaction is (2R,3R)-tartrate = oxaloacetate + H2O. This Shigella sonnei (strain Ss046) protein is L(+)-tartrate dehydratase subunit beta (ttdB).